The primary structure comprises 297 residues: 4-hydroxy-tetrahydrodipicolinate synthase (297 aa).

Thr-47 contacts pyruvate. The active-site Proton donor/acceptor is the Tyr-135. Lys-163 serves as the catalytic Schiff-base intermediate with substrate. Ile-205 provides a ligand contact to pyruvate.

This sequence belongs to the DapA family. As to quaternary structure, homotetramer; dimer of dimers.

It localises to the cytoplasm. It catalyses the reaction L-aspartate 4-semialdehyde + pyruvate = (2S,4S)-4-hydroxy-2,3,4,5-tetrahydrodipicolinate + H2O + H(+). The protein operates within amino-acid biosynthesis; L-lysine biosynthesis via DAP pathway; (S)-tetrahydrodipicolinate from L-aspartate: step 3/4. Functionally, catalyzes the condensation of (S)-aspartate-beta-semialdehyde [(S)-ASA] and pyruvate to 4-hydroxy-tetrahydrodipicolinate (HTPA). The protein is 4-hydroxy-tetrahydrodipicolinate synthase of Dehalococcoides mccartyi (strain ATCC BAA-2266 / KCTC 15142 / 195) (Dehalococcoides ethenogenes (strain 195)).